We begin with the raw amino-acid sequence, 329 residues long: Diaminopimelate epimerase (329 aa).

Asn-14 and Asn-73 together coordinate substrate. Residue Cys-82 is the Proton donor of the active site. Substrate-binding positions include 83–84, Asn-170, Asn-206, and 224–225; these read GN and ER. The Proton acceptor role is filled by Cys-233. 234–235 contributes to the substrate binding site; sequence GT.

The protein belongs to the diaminopimelate epimerase family. Homodimer.

The protein resides in the cytoplasm. The catalysed reaction is (2S,6S)-2,6-diaminopimelate = meso-2,6-diaminopimelate. It functions in the pathway amino-acid biosynthesis; L-lysine biosynthesis via DAP pathway; DL-2,6-diaminopimelate from LL-2,6-diaminopimelate: step 1/1. Its function is as follows. Catalyzes the stereoinversion of LL-2,6-diaminopimelate (L,L-DAP) to meso-diaminopimelate (meso-DAP), a precursor of L-lysine and an essential component of the bacterial peptidoglycan. The sequence is that of Diaminopimelate epimerase from Listeria monocytogenes serotype 4b (strain CLIP80459).